Here is a 468-residue protein sequence, read N- to C-terminus: Ribosomal protein uS12 methylthiotransferase RimO (468 aa).

The MTTase N-terminal domain occupies 16–130 (NKIHFISLGC…ILSAIESRES (115 aa)). Positions 25, 61, 93, 164, 168, and 171 each coordinate [4Fe-4S] cluster. Residues 150–382 (STPKHYAYLK…SQIQKRNVDK (233 aa)) enclose the Radical SAM core domain. One can recognise a TRAM domain in the interval 385 to 455 (QKLIGEKIEA…GYDLVGRVVK (71 aa)).

The protein belongs to the methylthiotransferase family. RimO subfamily. [4Fe-4S] cluster serves as cofactor.

Its subcellular location is the cytoplasm. The catalysed reaction is L-aspartate(89)-[ribosomal protein uS12]-hydrogen + (sulfur carrier)-SH + AH2 + 2 S-adenosyl-L-methionine = 3-methylsulfanyl-L-aspartate(89)-[ribosomal protein uS12]-hydrogen + (sulfur carrier)-H + 5'-deoxyadenosine + L-methionine + A + S-adenosyl-L-homocysteine + 2 H(+). Its function is as follows. Catalyzes the methylthiolation of an aspartic acid residue of ribosomal protein uS12. The polypeptide is Ribosomal protein uS12 methylthiotransferase RimO (Chlamydia pneumoniae (Chlamydophila pneumoniae)).